The following is a 142-amino-acid chain: MKTFTAKPETVKRDWFVVDAAGQTLGRLATEIASRLRGKHKPEYTPHVDTGDYIVVINAEQVRVTGAKTTDKMYYSHSGFPGGIKSINFEKLIAKAPERVIETAVKGMLPKNPLGRDMYRKLKVYAGAAHPHTAQQPQELKI.

It belongs to the universal ribosomal protein uL13 family. In terms of assembly, part of the 50S ribosomal subunit.

In terms of biological role, this protein is one of the early assembly proteins of the 50S ribosomal subunit, although it is not seen to bind rRNA by itself. It is important during the early stages of 50S assembly. This Pseudomonas fluorescens (strain ATCC BAA-477 / NRRL B-23932 / Pf-5) protein is Large ribosomal subunit protein uL13.